The sequence spans 449 residues: MSVTASTLVLAAPVDPDLSGFGDDPFWLILLKGVAVFAFLLLMTLFSIVFERKVVAKMQQRVGPNRHGPKGWLQSLADGAKLMLKEDLIPALADKPIFILAPILSAVPAFLAFAVIPFGPEVSIFGERTTLQLADLPVSVLYMLAAASLGVYGLILSGWSSGSTYPLLGSLRSAAQIISYEVAMGLSFVAVFIYAGTLSTSGIVESQSGRWYIALVPSFVLYCISMVGETNRTPFDLPEAEGELVGGFHTEYSSIKFAFFFLAEYINMVTVSAIATTLFLGGWQPPPIPGLSGLDHGWVPLIWFVLKLLLFLFFFIWLRGTLPRLRYDQFMAFGWKVLIPVGLLWVLVIATFRVYQKDVDDRTPWLIGAGVVIGIMLIVALLDPGGAKHQRELEEAERRKLAEAPSLESIPWPPPPPGGAHHRPAVPAGTSANGSSTVIPADPPPRQES.

A run of 9 helical transmembrane segments spans residues 26-46 (FWLI…MTLF), 96-116 (PIFI…FAVI), 136-156 (LPVS…GLIL), 177-197 (IISY…YAGT), 211-231 (WYIA…GETN), 259-279 (FFFL…TTLF), 298-318 (WVPL…FIWL), 330-350 (FMAF…LVIA), and 365-385 (WLIG…LDPG). The segment at 396-449 (AERRKLAEAPSLESIPWPPPPPGGAHHRPAVPAGTSANGSSTVIPADPPPRQES) is disordered.

The protein belongs to the complex I subunit 1 family. In terms of assembly, NDH-1 is composed of 14 different subunits. Subunits NuoA, H, J, K, L, M, N constitute the membrane sector of the complex.

It localises to the cell membrane. It carries out the reaction a quinone + NADH + 5 H(+)(in) = a quinol + NAD(+) + 4 H(+)(out). NDH-1 shuttles electrons from NADH, via FMN and iron-sulfur (Fe-S) centers, to quinones in the respiratory chain. The immediate electron acceptor for the enzyme in this species is believed to be ubiquinone. Couples the redox reaction to proton translocation (for every two electrons transferred, four hydrogen ions are translocated across the cytoplasmic membrane), and thus conserves the redox energy in a proton gradient. This subunit may bind ubiquinone. This is NADH-quinone oxidoreductase subunit H from Frankia alni (strain DSM 45986 / CECT 9034 / ACN14a).